A 425-amino-acid polypeptide reads, in one-letter code: Multifunctional CCA protein (425 aa).

ATP is bound by residues Gly8 and Arg11. Residues Gly8 and Arg11 each coordinate CTP. The Mg(2+) site is built by Asp21 and Asp23. Positions 91, 141, and 144 each coordinate ATP. 3 residues coordinate CTP: Arg91, Arg141, and Arg144. One can recognise an HD domain in the interval Thr230–Ile331.

It belongs to the tRNA nucleotidyltransferase/poly(A) polymerase family. Bacterial CCA-adding enzyme type 1 subfamily. In terms of assembly, monomer. Can also form homodimers and oligomers. It depends on Mg(2+) as a cofactor. Ni(2+) is required as a cofactor.

The catalysed reaction is a tRNA precursor + 2 CTP + ATP = a tRNA with a 3' CCA end + 3 diphosphate. It carries out the reaction a tRNA with a 3' CCA end + 2 CTP + ATP = a tRNA with a 3' CCACCA end + 3 diphosphate. Functionally, catalyzes the addition and repair of the essential 3'-terminal CCA sequence in tRNAs without using a nucleic acid template. Adds these three nucleotides in the order of C, C, and A to the tRNA nucleotide-73, using CTP and ATP as substrates and producing inorganic pyrophosphate. tRNA 3'-terminal CCA addition is required both for tRNA processing and repair. Also involved in tRNA surveillance by mediating tandem CCA addition to generate a CCACCA at the 3' terminus of unstable tRNAs. While stable tRNAs receive only 3'-terminal CCA, unstable tRNAs are marked with CCACCA and rapidly degraded. This chain is Multifunctional CCA protein, found in Acidovorax sp. (strain JS42).